Here is a 689-residue protein sequence, read N- to C-terminus: Armadillo-like helical domain-containing protein 3 (689 aa).

A helical membrane pass occupies residues 520-538 (IFTLALMIVNLFNMFITYG).

This sequence belongs to the ARMH3 family. Interacts with PI4KB. Interacts with GBF1.

It localises to the golgi apparatus membrane. Its subcellular location is the cytoplasm. Functionally, involved in GBF1 recruitment, Golgi maintenance and protein secretion. This is Armadillo-like helical domain-containing protein 3 from Homo sapiens (Human).